The following is a 173-amino-acid chain: Alpha-crystallin A chain (173 aa).

Met-1 is subject to N-acetylmethionine. Residues 1–63 (MDIAIQHPWF…RSVLDSGVSE (63 aa)) are required for complex formation with BFSP1 and BFSP2. The residue at position 6 (Gln-6) is a Deamidated glutamine; partial. Ser-45 carries the phosphoserine modification. Gln-50 is subject to Deamidated glutamine; partial. The sHSP domain maps to 52-162 (LFRSVLDSGV…GHSERAIPVS (111 aa)). Lys-70 carries the post-translational modification N6-acetyllysine. Gln-90 is modified (deamidated glutamine; partial). Lys-99 carries the N6-acetyllysine modification. His-100 lines the Zn(2+) pocket. Position 101 is a deamidated asparagine; partial (Asn-101). Glu-102 and His-107 together coordinate Zn(2+). Position 122 is a phosphoserine (Ser-122). Asn-123 bears the Deamidated asparagine; partial mark. The segment at 144-173 (PKIPSGMDAGHSERAIPVSREEKPSSAPSS) is disordered. Over residues 153–167 (GHSERAIPVSREEKP) the composition is skewed to basic and acidic residues. His-154 lines the Zn(2+) pocket. O-linked (GlcNAc) serine glycosylation is present at Ser-162.

Belongs to the small heat shock protein (HSP20) family. Heteromer composed of three CRYAA and one CRYAB subunits. Inter-subunit bridging via zinc ions enhances stability, which is crucial as there is no protein turn over in the lens. Can also form homodimers and homotetramers (dimers of dimers) which serve as the building blocks of homooligomers. Within homooligomers, the zinc-binding motif is created from residues of 3 different molecules. His-100 and Glu-102 from one molecule are ligands of the zinc ion, and His-107 and His-154 residues from additional molecules complete the site with tetrahedral coordination geometry. Part of a complex required for lens intermediate filament formation composed of BFSP1, BFSP2 and CRYAA. Acetylation at Lys-70 may increase chaperone activity. Post-translationally, undergoes age-dependent proteolytical cleavage at the C-terminus.

The protein resides in the cytoplasm. Its subcellular location is the nucleus. Its function is as follows. Contributes to the transparency and refractive index of the lens. Acts as a chaperone, preventing aggregation of various proteins under a wide range of stress conditions. Required for the correct formation of lens intermediate filaments as part of a complex composed of BFSP1, BFSP2 and CRYAA. The sequence is that of Alpha-crystallin A chain (CRYAA) from Ceratotherium simum (White rhinoceros).